The following is a 143-amino-acid chain: Large ribosomal subunit protein uL13 (143 aa).

Belongs to the universal ribosomal protein uL13 family. Part of the 50S ribosomal subunit.

Its function is as follows. This protein is one of the early assembly proteins of the 50S ribosomal subunit, although it is not seen to bind rRNA by itself. It is important during the early stages of 50S assembly. The protein is Large ribosomal subunit protein uL13 of Thermoanaerobacter pseudethanolicus (strain ATCC 33223 / 39E) (Clostridium thermohydrosulfuricum).